We begin with the raw amino-acid sequence, 133 residues long: MTLNLSVLTPNRIVWDSEVEEIVLSTNSGQIGILPNHAPIATAVDIGILRIRLNDQWLTMALMGGFARIGNNEITVLVNDAEKGSDIDPQEAQQTLELAEANVKKAEGRRQKIEANLALQRARTRVEAINPIS.

This sequence belongs to the ATPase epsilon chain family. As to quaternary structure, F-type ATPases have 2 components, CF(1) - the catalytic core - and CF(0) - the membrane proton channel. CF(1) has five subunits: alpha(3), beta(3), gamma(1), delta(1), epsilon(1). CF(0) has three main subunits: a, b and c.

It is found in the plastid. It localises to the chloroplast thylakoid membrane. In terms of biological role, produces ATP from ADP in the presence of a proton gradient across the membrane. This is ATP synthase epsilon chain, chloroplastic from Nicotiana tomentosiformis (Tobacco).